Consider the following 273-residue polypeptide: Bis(5'-nucleosyl)-tetraphosphatase, symmetrical (273 aa).

It belongs to the Ap4A hydrolase family.

It carries out the reaction P(1),P(4)-bis(5'-adenosyl) tetraphosphate + H2O = 2 ADP + 2 H(+). In terms of biological role, hydrolyzes diadenosine 5',5'''-P1,P4-tetraphosphate to yield ADP. This Aeromonas hydrophila subsp. hydrophila (strain ATCC 7966 / DSM 30187 / BCRC 13018 / CCUG 14551 / JCM 1027 / KCTC 2358 / NCIMB 9240 / NCTC 8049) protein is Bis(5'-nucleosyl)-tetraphosphatase, symmetrical.